Reading from the N-terminus, the 304-residue chain is Porphobilinogen deaminase (304 aa).

The residue at position 240 (Cys-240) is an S-(dipyrrolylmethanemethyl)cysteine.

The protein belongs to the HMBS family. As to quaternary structure, monomer. It depends on dipyrromethane as a cofactor.

The catalysed reaction is 4 porphobilinogen + H2O = hydroxymethylbilane + 4 NH4(+). It participates in porphyrin-containing compound metabolism; protoporphyrin-IX biosynthesis; coproporphyrinogen-III from 5-aminolevulinate: step 2/4. Its function is as follows. Tetrapolymerization of the monopyrrole PBG into the hydroxymethylbilane pre-uroporphyrinogen in several discrete steps. This chain is Porphobilinogen deaminase, found in Xanthomonas oryzae pv. oryzae (strain KACC10331 / KXO85).